We begin with the raw amino-acid sequence, 356 residues long: S-adenosylmethionine:tRNA ribosyltransferase-isomerase (356 aa).

The protein belongs to the QueA family. In terms of assembly, monomer.

It is found in the cytoplasm. The enzyme catalyses 7-aminomethyl-7-carbaguanosine(34) in tRNA + S-adenosyl-L-methionine = epoxyqueuosine(34) in tRNA + adenine + L-methionine + 2 H(+). The protein operates within tRNA modification; tRNA-queuosine biosynthesis. Its function is as follows. Transfers and isomerizes the ribose moiety from AdoMet to the 7-aminomethyl group of 7-deazaguanine (preQ1-tRNA) to give epoxyqueuosine (oQ-tRNA). The polypeptide is S-adenosylmethionine:tRNA ribosyltransferase-isomerase (Ralstonia nicotianae (strain ATCC BAA-1114 / GMI1000) (Ralstonia solanacearum)).